A 445-amino-acid chain; its full sequence is Xylose isomerase (445 aa).

Residues His99 and Asp102 contribute to the active site. Positions 230, 266, 269, 294, 305, 307, and 337 each coordinate Mg(2+).

The protein belongs to the xylose isomerase family. Homotetramer. It depends on Mg(2+) as a cofactor.

It localises to the cytoplasm. It carries out the reaction alpha-D-xylose = alpha-D-xylulofuranose. This chain is Xylose isomerase, found in Geobacillus kaustophilus (strain HTA426).